The chain runs to 944 residues: MIYNLSFWRILRISIFIIFLFNFTYVCNIKYNVINKKNVSLVSDTLICREKRQKWWLWKTPSFLKRHSFSRIIKCCDKEQNNIGHFKKSICSLNYIPSFNLLLLLKKWEGLIKKKKNNHNFYEIAHNKITRNINSNWHLSGKGDINDYTKENDSNIYKDEEYNKNQYNDNKNDDTLNKDIVSIANSNLNNEMLHKYNIEQKNVRNFCILAHIDSGKSTLADRFLELTNTIKKKRMQDQFLDMMALERERGITIKLKAVRMNYKNYIFNLIDTPGHFDFYHEVKRSLNVCEGAILLIDGGKGIQAQTLNIFLEIKKHNIKIIPVINKIDLNTCIYDKICDDLVNKFDFKKEEILKISAKYGNNVENVFQRIITDIPYPPIKSNTFFRGVVFDSFYDQYKGVILIIKVLNGFLKKKQKIYFINSKKSYIIQEVGYLTPSMKPTDIIYQGDIAYISSNIRNFDDIEISETIINHDVVQINEQKKKIHINIKKSDFYNTLTNTDQHISNAINSDMDNPVSINFDNKENENLINIKETRCNPEYDLHYSDKKDVVMETNTIKEMSQIENSNIGTDKMHEKNEEFDEINIKDIAADKIDIAYPSVYCNIYSMNDKKCKELEVALNKLKLNDTSFSFKTDICETLGKGFKCGFNGLLHLNIIQERIKREYNVETIITAPSVNYLVKVKEKYIDKKLKAKLIEKNFDINSINIDVGNSESVKKEANETKTQNGMFFMTSNSNDIPQKNYIEHIYEPYVKTNIITPEEYQKHIMNECFKRRGIFIKKEHINDQIIFTFDMPLSEILINFLDEIKSSTKGFGSMSYENYIIYKQSDLYKIHIYINNKCIESLTFIAHKLNYQEKSKTLVSKLKSLINPHQFLIVIQAAIGSNVFVSEKIKPLKKNVTAKCYGGDITRRRKLLEKQNEGKKKMFTIGKVKLPPGIFTKLFNIKDK.

In terms of domain architecture, tr-type G spans 201-379; it reads KNVRNFCILA…IITDIPYPPI (179 aa). GTP-binding positions include 210–217, 271–275, and 325–328; these read AHIDSGKS, DTPGH, and NKID.

This sequence belongs to the TRAFAC class translation factor GTPase superfamily. Classic translation factor GTPase family. LepA subfamily.

The protein resides in the mitochondrion inner membrane. The enzyme catalyses GTP + H2O = GDP + phosphate + H(+). In terms of biological role, promotes mitochondrial protein synthesis. May act as a fidelity factor of the translation reaction, by catalyzing a one-codon backward translocation of tRNAs on improperly translocated ribosomes. Binds to mitochondrial ribosomes in a GTP-dependent manner. The polypeptide is Translation factor GUF1 homolog, mitochondrial (Plasmodium yoelii yoelii).